A 1388-amino-acid chain; its full sequence is ABC transporter G family member 52 (1388 aa).

Positions 1–24 (MDDAGEICSFSRSSSSAREDDEED) are disordered. The region spanning 135–406 (TNALCITKKI…FKSVGFKCPE (272 aa)) is the ABC transporter 1 domain. 168 to 175 (GPPGSGKT) serves as a coordination point for ATP. The 214-residue stretch at 484-697 (ELLKANIYRE…ALNALAVNEF (214 aa)) folds into the ABC transmembrane type-2 1 domain. A run of 7 helical transmembrane segments spans residues 503–523 (LYIFKAIQLKLVAINAMTVFI), 541–561 (ALFYGMMMIVYSALAEMGPAI), 590–610 (IPISFLNTTVWVFLTYYVIGF), 621–641 (FLVLFVLCEVIYALFRFIVAL), 646–666 (VIASNMGPFCILIFMLSCGFI), 675–695 (WWIWLYWISPLMYALNALAVN), and 732–752 (ISIGALLGYVLLFNVLYTICL). Positions 791-1043 (ITFEDIRYSV…ELIKYFEAIQ (253 aa)) constitute an ABC transporter 2 domain. Position 836–843 (836–843 (GVSGAGKT)) interacts with ATP. Residues 1116–1330 (TQWLACLWKQ…TLNGLLTSQF (215 aa)) form the ABC transmembrane type-2 2 domain. A run of 7 helical transmembrane segments spans residues 1136–1156 (IVVRYLFTIVVALLFGTMFWG), 1167–1183 (LFSIMGAMYSACMAMGV), 1223–1243 (FPYIFLQTIIYCVLVYAMVGY), 1250–1270 (FLWYLFFMFFTLSYFTFYGMM), 1280–1300 (MSAVVSTAFYNIWNLFSGFLI), 1305–1325 (IPVWWRWYYWMCPVAWTLNGL), and 1357–1377 (LLWVAAVAVVSFAILFAFLFG).

This sequence belongs to the ABC transporter superfamily. ABCG family. PDR (TC 3.A.1.205) subfamily.

The protein resides in the membrane. Its function is as follows. May be a general defense protein. In Oryza sativa subsp. japonica (Rice), this protein is ABC transporter G family member 52.